The following is a 415-amino-acid chain: 3-isopropylmalate dehydratase large subunit (415 aa).

[4Fe-4S] cluster-binding residues include C297, C355, and C358.

This sequence belongs to the aconitase/IPM isomerase family. LeuC type 2 subfamily. In terms of assembly, heterodimer of LeuC and LeuD. Requires [4Fe-4S] cluster as cofactor.

The enzyme catalyses (2R,3S)-3-isopropylmalate = (2S)-2-isopropylmalate. It functions in the pathway amino-acid biosynthesis; L-leucine biosynthesis; L-leucine from 3-methyl-2-oxobutanoate: step 2/4. Its function is as follows. Catalyzes the isomerization between 2-isopropylmalate and 3-isopropylmalate, via the formation of 2-isopropylmaleate. The protein is 3-isopropylmalate dehydratase large subunit of Caldivirga maquilingensis (strain ATCC 700844 / DSM 13496 / JCM 10307 / IC-167).